We begin with the raw amino-acid sequence, 648 residues long: Protein teflon (648 aa).

The segment at 33–56 (LYCHFCRDLFTQLPEFLRHLQGAH) adopts a C2H2-type 1 zinc-finger fold. Disordered stretches follow at residues 76 to 127 (SGEQ…GSQN) and 146 to 170 (EHIN…NSES). Positions 85-94 (VGHNSSSSDS) are enriched in polar residues. Residues 96-107 (GLAKSEDSRATE) show a composition bias toward basic and acidic residues. The C2H2-type 2; degenerate zinc finger occupies 598–620 (YFCKCCDDIFTLNEDYIRHLVSQ). The C2H2-type 3 zinc finger occupies 624 to 647 (YQCTKCIKTFKYQGHYDKHMRTVH).

Belongs to the Teflon family.

It is found in the nucleus. The protein resides in the chromosome. Functionally, specifically required in males for proper segregation of autosomal bivalents at meiosis I. Expression is required in the male germ line prior to spermatocyte stage S4. May have a role as a bridging molecule maintaining adhesion to hold autosome bivalents together via heterochromatic connections. The protein is Protein teflon of Drosophila yakuba (Fruit fly).